A 349-amino-acid chain; its full sequence is 3-dehydroquinate synthase (349 aa).

Residues 63-68 (DGEDYK), 97-101 (GVIGD), 121-122 (TT), K134, K143, and 161-164 (FLQT) contribute to the NAD(+) site. Zn(2+)-binding residues include E176, H235, and H252.

It belongs to the sugar phosphate cyclases superfamily. Dehydroquinate synthase family. It depends on Co(2+) as a cofactor. The cofactor is Zn(2+). Requires NAD(+) as cofactor.

The protein localises to the cytoplasm. It catalyses the reaction 7-phospho-2-dehydro-3-deoxy-D-arabino-heptonate = 3-dehydroquinate + phosphate. It functions in the pathway metabolic intermediate biosynthesis; chorismate biosynthesis; chorismate from D-erythrose 4-phosphate and phosphoenolpyruvate: step 2/7. Catalyzes the conversion of 3-deoxy-D-arabino-heptulosonate 7-phosphate (DAHP) to dehydroquinate (DHQ). The sequence is that of 3-dehydroquinate synthase from Nitratiruptor sp. (strain SB155-2).